The chain runs to 300 residues: Peroxisomal 2,4-dienoyl-CoA reductase [(3E)-enoyl-CoA-producing] (300 aa).

NADP(+) contacts are provided by residues 42–47 (GGGSGI), 67–71 (RNLEK), and Asp93. Residue Arg67 coordinates substrate. Residues Arg95, Phe125, and 133-135 (SFN) each bind substrate. NADP(+) is bound by residues Lys189 and 215-221 (PGPISGT). Arg226 serves as a coordination point for substrate. Residues 298 to 300 (AKL) carry the Microbody targeting signal motif.

The protein belongs to the short-chain dehydrogenases/reductases (SDR) family. 2,4-dienoyl-CoA reductase subfamily. Monomer, dimer and oligomer.

The protein localises to the peroxisome. It catalyses the reaction a (2E,4Z)-dienoyl-CoA + NADPH + H(+) = a 4,5-saturated-(3E)-enoyl-CoA + NADP(+). The catalysed reaction is a (2E,4E)-dienoyl-CoA + NADPH + H(+) = a 4,5-saturated-(3E)-enoyl-CoA + NADP(+). The enzyme catalyses (2E,4E)-hexadienoyl-CoA + NADPH + H(+) = (3E)-hexenoyl-CoA + NADP(+). It carries out the reaction (2E,4E)-decadienoyl-CoA + NADPH + H(+) = (3E)-decenoyl-CoA + NADP(+). It catalyses the reaction (2E,4Z,7Z,10Z,13Z,16Z,19Z)-docosaheptaenoyl-CoA + NADPH + H(+) = (3E,7Z,10Z,13Z,16Z,19Z)-docosahexaenoyl-CoA + NADP(+). In terms of biological role, auxiliary enzyme of beta-oxidation. Participates in the degradation of unsaturated fatty enoyl-CoA esters having double bonds in both even- and odd-numbered positions in peroxisome. Catalyzes the NADP-dependent reduction of 2,4-dienoyl-CoA to yield trans-3-enoyl-CoA. This is Peroxisomal 2,4-dienoyl-CoA reductase [(3E)-enoyl-CoA-producing] (decr2) from Danio rerio (Zebrafish).